The primary structure comprises 396 residues: Inositol polyphosphate multikinase (396 aa).

Low complexity predominate over residues 1–13 (MAAEPPALRLRPP). Positions 1 to 22 (MAAEPPALRLRPPGSTGDSPPV) are disordered. Ala2 bears the N-acetylalanine mark. Position 19 is a phosphoserine (Ser19). Lys58 lines the ATP pocket. Arg65 lines the substrate pocket. ATP contacts are provided by residues 114 to 116 (EDV) and Asp127. Substrate is bound by residues Lys129, 143–150 (KIQQQVSK), and Gln179. The short motif at 300-310 (RHRKLYAKKHQ) is the Nuclear localization signal element. ATP is bound at residue Asp365.

It belongs to the inositol phosphokinase (IPK) family. Mg(2+) is required as a cofactor. As to expression, highly expressed in kidney, and at lower levels in hippocampus, brain cortex, cerebellum, heart and lung.

It localises to the nucleus. It carries out the reaction 1D-myo-inositol 1,4,5-trisphosphate + 2 ATP = 1D-myo-inositol 1,3,4,5,6-pentakisphosphate + 2 ADP + 2 H(+). The enzyme catalyses 1D-myo-inositol 1,3,4,6-tetrakisphosphate + ATP = 1D-myo-inositol 1,3,4,5,6-pentakisphosphate + ADP + H(+). The catalysed reaction is 1-octadecanoyl-2-(5Z,8Z,11Z,14Z)-eicosatetraenoyl-sn-glycero-3-phospho-1D-myo-inositol 4,5-bisphosphate + ATP = 1-octadecanoyl-2-(5Z,8Z,11Z,14Z-eicosatetraenoyl)-sn-glycero-3-phospho-(1D-myo-inositol 3,4,5-triphosphate) + ADP + H(+). It catalyses the reaction a 1,2-diacyl-sn-glycero-3-phospho-(1D-myo-inositol-4,5-bisphosphate) + ATP = a 1,2-diacyl-sn-glycero-3-phospho-(1D-myo-inositol-3,4,5-trisphosphate) + ADP + H(+). It carries out the reaction 1D-myo-inositol 1,4,5,6-tetrakisphosphate + ATP = 1D-myo-inositol 1,3,4,5,6-pentakisphosphate + ADP + H(+). The protein operates within phospholipid metabolism; phosphatidylinositol metabolism. Functionally, inositol phosphate kinase with a broad substrate specificity. Phosphorylates inositol 1,4,5-trisphosphate (Ins(1,4,5)P3) first to inositol 1,3,4,5-tetrakisphosphate and then to inositol 1,3,4,5,6-pentakisphosphate (Ins(1,3,4,5,6)P5). Phosphorylates inositol 1,3,4,6-tetrakisphosphate (Ins(1,3,4,6)P4). Phosphorylates inositol 1,4,5,6-tetrakisphosphate (Ins(1,4,5,6)P4). Phosphorylates glycero-3-phospho-1D-myo-inositol 4,5-bisphosphate to glycero-3-phospho-1D-myo-inositol 3,4,5-trisphosphate. Plays an important role in MLKL-mediated necroptosis via its role in the biosynthesis of inositol pentakisphosphate (InsP5) and inositol hexakisphosphate (InsP6). Binding of these highly phosphorylated inositol phosphates to MLKL mediates the release of an N-terminal auto-inhibitory region, leading to activation of the kinase. Essential for activated phospho-MLKL to oligomerize and localize to the cell membrane during necroptosis. Required for normal embryonic development, probably via its role in the biosynthesis of inositol 1,3,4,5,6-pentakisphosphate (Ins(1,3,4,5,6)P5) and inositol hexakisphosphate (InsP6). This chain is Inositol polyphosphate multikinase (Ipmk), found in Rattus norvegicus (Rat).